The sequence spans 707 residues: Polyribonucleotide nucleotidyltransferase (707 aa).

2 residues coordinate Mg(2+): aspartate 486 and aspartate 492. One can recognise a KH domain in the interval 553–612 (PTVTTLRVLPDKIPIIIGPAGKNIKKIIEETKVKIDLDPEGLVKIYATSKEAAEKAVSMI). The 69-residue stretch at 622–690 (GEVYMGKVTR…DQGRIKVSLK (69 aa)) folds into the S1 motif domain.

The protein belongs to the polyribonucleotide nucleotidyltransferase family. Mg(2+) serves as cofactor.

The protein resides in the cytoplasm. The catalysed reaction is RNA(n+1) + phosphate = RNA(n) + a ribonucleoside 5'-diphosphate. Functionally, involved in mRNA degradation. Catalyzes the phosphorolysis of single-stranded polyribonucleotides processively in the 3'- to 5'-direction. The chain is Polyribonucleotide nucleotidyltransferase from Sulfurihydrogenibium azorense (strain DSM 15241 / OCM 825 / Az-Fu1).